Consider the following 807-residue polypeptide: Carbamoyltransferase HypF2 (807 aa).

The Acylphosphatase-like domain maps to 14–101 (RIRIRVRGVV…VDADGFAILE (88 aa)). C4-type zinc fingers lie at residues 120-145 (CPDCLAELFDPANRRYRYAFINCTQC) and 170-195 (CRPCLDEYNAPEHRRFHAEPNACPDC). Residues 212–415 (VDPIAETVAR…HVQFIRRARG (204 aa)) form the YrdC-like domain. Residues 663–682 (WGEQPSPGRPKTVAHSLGGV) are disordered.

Belongs to the carbamoyltransferase HypF family.

It carries out the reaction C-terminal L-cysteinyl-[HypE protein] + carbamoyl phosphate + ATP + H2O = C-terminal S-carboxamide-L-cysteinyl-[HypE protein] + AMP + phosphate + diphosphate + H(+). Its pathway is protein modification; [NiFe] hydrogenase maturation. Its function is as follows. Involved in the maturation of [NiFe] hydrogenases. Along with HypE, it catalyzes the synthesis of the CN ligands of the active site iron of [NiFe]-hydrogenases. HypF functions as a carbamoyl transferase using carbamoylphosphate as a substrate and transferring the carboxamido moiety in an ATP-dependent reaction to the thiolate of the C-terminal cysteine of HypE yielding a protein-S-carboxamide. This chain is Carbamoyltransferase HypF2 (hypF2), found in Cupriavidus necator (strain ATCC 17699 / DSM 428 / KCTC 22496 / NCIMB 10442 / H16 / Stanier 337) (Ralstonia eutropha).